A 161-amino-acid polypeptide reads, in one-letter code: Large ribosomal subunit protein uL29c (161 aa).

The N-terminal 61 residues, 1–61 (MATMSLAAAS…ERRAAAMVAM (61 aa)), are a transit peptide targeting the chloroplast.

This sequence belongs to the universal ribosomal protein uL29 family. As to quaternary structure, part of the 50S ribosomal subunit.

It localises to the plastid. The protein resides in the chloroplast. In Zea mays (Maize), this protein is Large ribosomal subunit protein uL29c (RPL29).